A 216-amino-acid polypeptide reads, in one-letter code: Elongation factor Ts (216 aa).

The involved in Mg(2+) ion dislocation from EF-Tu stretch occupies residues Thr81–Val84.

This sequence belongs to the EF-Ts family.

The protein localises to the cytoplasm. In terms of biological role, associates with the EF-Tu.GDP complex and induces the exchange of GDP to GTP. It remains bound to the aminoacyl-tRNA.EF-Tu.GTP complex up to the GTP hydrolysis stage on the ribosome. The polypeptide is Elongation factor Ts (Geobacter sulfurreducens (strain ATCC 51573 / DSM 12127 / PCA)).